Reading from the N-terminus, the 371-residue chain is MTAQPDQTGSASGQIIISVDAMGGDAGPSVVVAGIAKSAKKNPQVGFILHGPEDTLKKLVAKRRVLDGRVVFRDCPDVVTMEDKPSQVVRNGKNTSMWSTLESVRNGEAAGAVSCGNTGALMALSMLRLRRLPGVTRPAIAILFPSGNPQGFNVLLDAGADIRADARDLLQYALMGASYARNGMNLLRPRVGLLNVGTEEHKGKAELKEAQALIAEYAERANYEFVGFVEGSDIPGKRCDVIVTDGFTGNVAIKTGEGTARMIGSLLREAFKYSPLSRLASLLAVTSLRRLSKRIDPRRVNGGVFLGLNGTVIKSHGSADDTGISAAVKLAFTLAQSGFAERLAARVASAAALTQDEAAPTGAQAEKQESR.

Belongs to the PlsX family. Homodimer. Probably interacts with PlsY.

Its subcellular location is the cytoplasm. It carries out the reaction a fatty acyl-[ACP] + phosphate = an acyl phosphate + holo-[ACP]. Its pathway is lipid metabolism; phospholipid metabolism. Its function is as follows. Catalyzes the reversible formation of acyl-phosphate (acyl-PO(4)) from acyl-[acyl-carrier-protein] (acyl-ACP). This enzyme utilizes acyl-ACP as fatty acyl donor, but not acyl-CoA. The chain is Phosphate acyltransferase from Ruegeria pomeroyi (strain ATCC 700808 / DSM 15171 / DSS-3) (Silicibacter pomeroyi).